We begin with the raw amino-acid sequence, 490 residues long: Katanin p60 ATPase-containing subunit A-like 1 (490 aa).

Met-1 bears the N-acetylmethionine mark. The disordered stretch occupies residues 95–178; sequence DPAVWPPPVP…MQDGASDGDI (84 aa). Residues 116–127 are compositionally biased toward basic and acidic residues; it reads PNREVRPLRKDV. Low complexity predominate over residues 128–139; that stretch reads AGVGARGPVGRA. Residues 143 to 169 show a composition bias toward basic and acidic residues; it reads SKSEKPSTNKDKDYRARGRDDKGRKNM. A Phosphoserine modification is found at Ser-174. 248–255 lines the ATP pocket; sequence GPPGTGKT.

Belongs to the AAA ATPase family. Katanin p60 subunit A1 subfamily. A-like 1 sub-subfamily. In terms of assembly, interacts with KATNB1 and KATNBL1.

The protein localises to the cytoplasm. The protein resides in the cytoskeleton. It is found in the spindle pole. Its subcellular location is the spindle. It carries out the reaction n ATP + n H2O + a microtubule = n ADP + n phosphate + (n+1) alpha/beta tubulin heterodimers.. Functionally, regulates microtubule dynamics in Sertoli cells, a process that is essential for spermiogenesis and male fertility. Severs microtubules in an ATP-dependent manner, promoting rapid reorganization of cellular microtubule arrays. Has microtubule-severing activity in vitro. The sequence is that of Katanin p60 ATPase-containing subunit A-like 1 from Sorex araneus (Eurasian common shrew).